Reading from the N-terminus, the 209-residue chain is Guanylate kinase (209 aa).

In terms of domain architecture, Guanylate kinase-like spans Gly5–Val182. An ATP-binding site is contributed by Gly12–Gly19.

The protein belongs to the guanylate kinase family.

The protein resides in the cytoplasm. The enzyme catalyses GMP + ATP = GDP + ADP. Functionally, essential for recycling GMP and indirectly, cGMP. This Clostridium acetobutylicum (strain ATCC 824 / DSM 792 / JCM 1419 / IAM 19013 / LMG 5710 / NBRC 13948 / NRRL B-527 / VKM B-1787 / 2291 / W) protein is Guanylate kinase.